Consider the following 791-residue polypeptide: AP-1 complex subunit gamma-like 2 (791 aa).

The region spanning 671 to 786 is the GAE domain; that stretch reads APIPSVRVFE…QEIFEVDNLP (116 aa).

Belongs to the adaptor complexes large subunit family. As to quaternary structure, may interact with AP1S1/Sigma1A-adaptin and AP1S2/Sigma1B-adaptin. Probably does not interact with APB1. Interacts (via GAE domain) with RABEP1, NECAP1, CLINT1 and AFTPH/aftiphilin. Interacts with HBV major surface antigen L. Interacts with HBV core protein C in a ubiquitin-dependent manner. Binds ubiquitin. As to expression, widely expressed.

Its subcellular location is the golgi apparatus membrane. The protein localises to the cytoplasmic vesicle membrane. It is found in the endosome membrane. Functionally, may function in protein sorting in late endosomes or multivesucular bodies (MVBs). Involved in MVB-assisted maturation of hepatitis B virus (HBV). In Mus musculus (Mouse), this protein is AP-1 complex subunit gamma-like 2 (Ap1g2).